Reading from the N-terminus, the 709-residue chain is Meiotic sister-chromatid recombination protein 6, mitochondrial (709 aa).

The N-terminal 29 residues, 1 to 29 (MLRINQRLLVRSLRDAQYQYLKSTALRFL), are a transit peptide targeting the mitochondrion.

It is found in the mitochondrion. May be involved in the control of meiotic sister-chromatid recombination. The polypeptide is Meiotic sister-chromatid recombination protein 6, mitochondrial (MSC6) (Candida glabrata (strain ATCC 2001 / BCRC 20586 / JCM 3761 / NBRC 0622 / NRRL Y-65 / CBS 138) (Yeast)).